The primary structure comprises 697 residues: Potassium-transporting ATPase ATP-binding subunit (697 aa).

Transmembrane regions (helical) follow at residues 55–75 (PIMF…FLPS), 79–99 (SIPG…VLFA), 245–265 (LTLI…YLGF), and 271–291 (VLVA…LSAI). Residue Asp-324 is the 4-aspartylphosphate intermediate of the active site. ATP contacts are provided by residues Asp-361, Glu-365, 393–400 (FKAETRMS), and Lys-412. Asp-535 and Asp-539 together coordinate Mg(2+). The next 3 helical transmembrane spans lie at 605-625 (FAII…LNIM), 633-653 (AILS…PLAM), and 677-697 (GGVI…GLFI).

Belongs to the cation transport ATPase (P-type) (TC 3.A.3) family. Type IA subfamily. As to quaternary structure, the system is composed of three essential subunits: KdpA, KdpB and KdpC.

It is found in the cell membrane. The enzyme catalyses K(+)(out) + ATP + H2O = K(+)(in) + ADP + phosphate + H(+). In terms of biological role, part of the high-affinity ATP-driven potassium transport (or Kdp) system, which catalyzes the hydrolysis of ATP coupled with the electrogenic transport of potassium into the cytoplasm. This subunit is responsible for energy coupling to the transport system and for the release of the potassium ions to the cytoplasm. This chain is Potassium-transporting ATPase ATP-binding subunit, found in Bacillus cereus (strain B4264).